We begin with the raw amino-acid sequence, 405 residues long: Pentatricopeptide repeat-containing protein At3g14580, mitochondrial (405 aa).

The transit peptide at 1-37 (MILRRLVLSATSNSNPRRSQSLSSSGVRILSSSSSDR) directs the protein to the mitochondrion. The segment at 13-44 (NSNPRRSQSLSSSGVRILSSSSSDRYTSSSQR) is disordered. PPR repeat units follow at residues 94 to 124 (TESL…IKLE), 130 to 165 (SEEF…GCWP), 166 to 200 (SSKS…GVEI), 201 to 235 (DACC…KSRP), 236 to 270 (NVMT…RIEP), 271 to 305 (DTIT…GCEP), 306 to 340 (NPGT…GMRP), and 341 to 375 (SFLS…GFVP).

It belongs to the PPR family. P subfamily.

The protein resides in the mitochondrion. The polypeptide is Pentatricopeptide repeat-containing protein At3g14580, mitochondrial (Arabidopsis thaliana (Mouse-ear cress)).